Consider the following 310-residue polypeptide: N-acetyl-gamma-glutamyl-phosphate reductase (310 aa).

Cys-117 is a catalytic residue.

It belongs to the NAGSA dehydrogenase family. Type 2 subfamily.

It is found in the cytoplasm. The catalysed reaction is N-acetyl-L-glutamate 5-semialdehyde + phosphate + NADP(+) = N-acetyl-L-glutamyl 5-phosphate + NADPH + H(+). It functions in the pathway amino-acid biosynthesis; L-arginine biosynthesis; N(2)-acetyl-L-ornithine from L-glutamate: step 3/4. In terms of biological role, catalyzes the NADPH-dependent reduction of N-acetyl-5-glutamyl phosphate to yield N-acetyl-L-glutamate 5-semialdehyde. The protein is N-acetyl-gamma-glutamyl-phosphate reductase of Rhizobium etli (strain ATCC 51251 / DSM 11541 / JCM 21823 / NBRC 15573 / CFN 42).